A 207-amino-acid chain; its full sequence is Large ribosomal subunit protein uL4 (207 aa).

The segment at histidine 49–isoleucine 78 is disordered.

It belongs to the universal ribosomal protein uL4 family. Part of the 50S ribosomal subunit.

Functionally, one of the primary rRNA binding proteins, this protein initially binds near the 5'-end of the 23S rRNA. It is important during the early stages of 50S assembly. It makes multiple contacts with different domains of the 23S rRNA in the assembled 50S subunit and ribosome. Forms part of the polypeptide exit tunnel. In Streptococcus equi subsp. zooepidemicus (strain MGCS10565), this protein is Large ribosomal subunit protein uL4.